A 620-amino-acid polypeptide reads, in one-letter code: bZIP transcription factor 49 (620 aa).

Over 1–287 (MAEPVLEDTY…VAKVKKFKKV (287 aa)) the chain is Cytoplasmic. The segment covering 109 to 135 (SSCYNRESPTDSDFSGTSQSLSFSGQD) has biased composition (polar residues). Positions 109–155 (SSCYNRESPTDSDFSGTSQSLSFSGQDSAKRKTEIEEDSSDESRRLG) are disordered. The bZIP domain occupies 172-235 (EKKKNVRLVR…VTLRQQMGTR (64 aa)). A basic motif region spans residues 173 to 205 (KKKNVRLVRNRESAHLSRQRKKHYVEELEDKVK). Residues 211–218 (ISELSSKM) are leucine-zipper. The helical transmembrane segment at 288-308 (ASFSVFGFLFCMFLFGALVNI) threads the bilayer. Over 309–620 (SYGEYKSNYV…RPDVPHLMTS (312 aa)) the chain is Lumenal. Disordered regions lie at residues 343 to 364 (DSDQGVGRNVSETENLGPPRNS), 398 to 460 (ARDS…SNDQ), and 505 to 557 (PASP…RETK). N-linked (GlcNAc...) asparagine glycosylation is found at asparagine 351 and asparagine 363. The segment covering 352 to 364 (VSETENLGPPRNS) has biased composition (polar residues). 2 stretches are compositionally biased toward basic and acidic residues: residues 398-409 (ARDSETKNEEGK) and 432-441 (RTRDVSKHLY). 2 stretches are compositionally biased toward polar residues: residues 447–460 (GLSSSGSDDASNDQ) and 508–519 (PHTQQCKNTSDT). Asparagine 515 carries N-linked (GlcNAc...) asparagine glycosylation. The short motif at 526–529 (RRIL) is the RRIL cleavage motif element. N-linked (GlcNAc...) asparagine glycans are attached at residues asparagine 539 and asparagine 546. Basic and acidic residues predominate over residues 540 to 557 (LTKEDHNSSSKDKFRETK).

It belongs to the bZIP family. As to quaternary structure, interacts with BZIP28.

It localises to the endoplasmic reticulum membrane. The protein resides in the nucleus. Its function is as follows. Transcriptional activator involved in stress responses. The polypeptide is bZIP transcription factor 49 (Arabidopsis thaliana (Mouse-ear cress)).